The following is a 228-amino-acid chain: Ribonuclease 3 (228 aa).

Positions 3–132 (IRPLEEHLGI…FLGALYLDQG (130 aa)) constitute an RNase III domain. Glu45 serves as a coordination point for Mg(2+). Asp49 is an active-site residue. Mg(2+)-binding residues include Asp118 and Glu121. Glu121 is an active-site residue. In terms of domain architecture, DRBM spans 158–227 (DYKSQLQEFV…AKNALDSINN (70 aa)). Positions 205-228 (GTGRTKKEAEQRAAKNALDSINNS) are disordered.

Belongs to the ribonuclease III family. Homodimer. Mg(2+) is required as a cofactor.

The protein resides in the cytoplasm. The catalysed reaction is Endonucleolytic cleavage to 5'-phosphomonoester.. Its function is as follows. Digests double-stranded RNA. Involved in the processing of primary rRNA transcript to yield the immediate precursors to the large and small rRNAs (23S and 16S). Processes some mRNAs, and tRNAs when they are encoded in the rRNA operon. Processes pre-crRNA and tracrRNA of type II CRISPR loci if present in the organism. The protein is Ribonuclease 3 of Oceanobacillus iheyensis (strain DSM 14371 / CIP 107618 / JCM 11309 / KCTC 3954 / HTE831).